The primary structure comprises 322 residues: Undecaprenyl-phosphate 4-deoxy-4-formamido-L-arabinose transferase (322 aa).

Over 1–235 (MFEIHPVKKV…TCLTTTPLRM (235 aa)) the chain is Cytoplasmic. A helical transmembrane segment spans residues 236-256 (LSLLGSIIAIGGFSIAVLLVI). At 257–269 (LRLTFGPQWAAEG) the chain is on the periplasmic side. The helical transmembrane segment at 270–290 (VFMLFAVLFTFIGAQFIGMGL) threads the bilayer. The Cytoplasmic segment spans residues 291-322 (LGEYIGRIYTDVRARPRYFVQQVIRPSSKENE).

It belongs to the glycosyltransferase 2 family.

The protein resides in the cell inner membrane. The catalysed reaction is UDP-4-deoxy-4-formamido-beta-L-arabinose + di-trans,octa-cis-undecaprenyl phosphate = 4-deoxy-4-formamido-alpha-L-arabinopyranosyl di-trans,octa-cis-undecaprenyl phosphate + UDP. It participates in glycolipid biosynthesis; 4-amino-4-deoxy-alpha-L-arabinose undecaprenyl phosphate biosynthesis; 4-amino-4-deoxy-alpha-L-arabinose undecaprenyl phosphate from UDP-4-deoxy-4-formamido-beta-L-arabinose and undecaprenyl phosphate: step 1/2. Its pathway is bacterial outer membrane biogenesis; lipopolysaccharide biosynthesis. Its function is as follows. Catalyzes the transfer of 4-deoxy-4-formamido-L-arabinose from UDP to undecaprenyl phosphate. The modified arabinose is attached to lipid A and is required for resistance to polymyxin and cationic antimicrobial peptides. This chain is Undecaprenyl-phosphate 4-deoxy-4-formamido-L-arabinose transferase, found in Escherichia coli O45:K1 (strain S88 / ExPEC).